The chain runs to 250 residues: Vacuolar iron transporter 1 (250 aa).

Over 1–37 (MSSEEDKITRISIEPEKQTLLDHHTEKHFTAGEIVRD) the chain is Cytoplasmic. A helical membrane pass occupies residues 38 to 58 (IIIGVSDGLTVPFALAAGLSG). At 59 to 64 (ANASSS) the chain is on the vacuolar side. Residues 65 to 85 (IVLTAGIAEVAAGAISMGLGG) traverse the membrane as a helical segment. The Cytoplasmic segment spans residues 86–169 (YLAAKSEEDH…PDPKRALQSA (84 aa)). The cytoplasmic metal binding domain (MBD) stretch occupies residues 91-166 (SEEDHYAREM…LEKPDPKRAL (76 aa)). Residues Glu103, Glu106, Glu114, Glu117, Met150, and Glu154 each contribute to the Fe cation site. The chain crosses the membrane as a helical span at residues 170-190 (FTIAIAYVLGGFIPLLPYMLI). Residues 191–192 (PH) lie on the Vacuolar side of the membrane. The chain crosses the membrane as a helical span at residues 193 to 213 (AMDAVVASVVITLFALFIFGY). Over 214–227 (AKGHFTGSKPLRSA) the chain is Cytoplasmic. The helical transmembrane segment at 228–248 (FETAFIGAIASAAAFCLAKVV) threads the bilayer. The Vacuolar segment spans residues 249–250 (QH).

The protein belongs to the CCC1 family. Homodimer. The dimeric interaction is mediated by both the transmembrane domains (TMDs) and the cytoplasmic metal binding domain (MBD). As to expression, highly expressed in developing embryo and seed. Expressed in young seedlings, predominantly in the vasculature.

Its subcellular location is the vacuole membrane. The enzyme catalyses Fe(2+)(in) = Fe(2+)(out). Vacuolar iron transporter involved in the transfer of iron ions from the cytosol to the vacuole for intracellular iron storage. Involved in regulation of cellular iron homeostasis. Vacuolar iron storage is required for seed embryo and seedling development. This is Vacuolar iron transporter 1 from Arabidopsis thaliana (Mouse-ear cress).